We begin with the raw amino-acid sequence, 633 residues long: Ankyrin repeat and SOCS box protein 2 (633 aa).

Positions 26–45 (SEDELVQMAIEQSLADKTRG) constitute a UIM domain. 12 ANK repeats span residues 102 to 131 (APVD…NLSE), 135 to 165 (EGWL…VIDQ), 169 to 198 (QEET…EPDI), 202 to 231 (SRET…DTNH), 235 to 264 (RGWT…KVEA), 268 to 297 (YGIT…DINT), 301 to 330 (DSAS…DANK), 334 to 363 (DGML…RTRV), 366 to 395 (SGIS…DVNA), 408 to 437 (RRSS…DPNR), 438 to 467 (DVIN…NIDA), and 474 to 502 (TAFP…NGEP). Ser-369 is subject to Phosphoserine. The region spanning 579–633 (EDWAVIKEKAEPPRPLAHLCRLRVRKAIGKYRIKLLDTLPLPGRLIRYLKYENTQ) is the SOCS box domain.

The protein belongs to the ankyrin SOCS box (ASB) family. Component of a probable ECS E3 ubiquitin-protein ligase complex which contains CUL5, either RBX1 or RNF7/RBX2, Elongin BC complex (ELOB and ELOC) and ASB2. Interacts with SKP2. Through its interaction with SKP2, likely to bridge the formation of dimeric E3-ubiquitin-protein ligase complexes composed of an ECS complex and an SCF(SKP2) complex. Interacts with JAK2; the interaction targets JAK2 for Notch-mediated proteasomal degradation. Interacts with TCF3/E2A; the interaction is mediated by SKP2 and targets TCF3 for Notch-mediated proteasomal degradation. Interacts with DES. Monoubiquitinated.

The protein resides in the cytoplasm. Its subcellular location is the cytoskeleton. It localises to the stress fiber. It is found in the myofibril. The protein localises to the sarcomere. The protein resides in the z line. The protein operates within protein modification; protein ubiquitination. Functionally, substrate-recognition component of a SCF-like ECS (Elongin-Cullin-SOCS-box protein) E3 ubiquitin-protein ligase complex which mediates the ubiquitination and subsequent proteasomal degradation of target proteins. Mediates Notch-induced ubiquitination and degradation of substrates including E2A and JAK2. Required during embryonic heart development for complete heart looping. Required for cardiomyocyte differentiation. Involved in myogenic differentiation and targets filamin FLNB for proteasomal degradation but not filamin FLNA. Also targets DES for proteasomal degradation. Acts as a negative regulator of skeletal muscle mass. The chain is Ankyrin repeat and SOCS box protein 2 from Bos taurus (Bovine).